Reading from the N-terminus, the 410-residue chain is Serine hydroxymethyltransferase (410 aa).

(6S)-5,6,7,8-tetrahydrofolate contacts are provided by residues Leu-116 and 120–122; that span reads GHL. Lys-225 is modified (N6-(pyridoxal phosphate)lysine). Residue 349 to 351 participates in (6S)-5,6,7,8-tetrahydrofolate binding; it reads SPF.

Belongs to the SHMT family. As to quaternary structure, homodimer. Pyridoxal 5'-phosphate is required as a cofactor.

The protein localises to the cytoplasm. The catalysed reaction is (6R)-5,10-methylene-5,6,7,8-tetrahydrofolate + glycine + H2O = (6S)-5,6,7,8-tetrahydrofolate + L-serine. The protein operates within one-carbon metabolism; tetrahydrofolate interconversion. It functions in the pathway amino-acid biosynthesis; glycine biosynthesis; glycine from L-serine: step 1/1. In terms of biological role, catalyzes the reversible interconversion of serine and glycine with tetrahydrofolate (THF) serving as the one-carbon carrier. This reaction serves as the major source of one-carbon groups required for the biosynthesis of purines, thymidylate, methionine, and other important biomolecules. Also exhibits THF-independent aldolase activity toward beta-hydroxyamino acids, producing glycine and aldehydes, via a retro-aldol mechanism. The polypeptide is Serine hydroxymethyltransferase (Leuconostoc citreum (strain KM20)).